A 535-amino-acid chain; its full sequence is MSVRYTLNLRVFWPLVTGLCTALVCLYHALRSSEDARAESPDGADSGFPLLKVAILLLLGYILLRCRHAIRQRLLPGSSRPRGHANFSARSLQEPGLSILLESYYEHEVRLSPHVLGHSKAHVSRIVGELVQAGRARGSPGLITGGALALAFRGDFIQVGSAYEQHKIRRPDSFDVLVPLRLPPQVALEPRSLGTEPSLTPAFRSCFVCALKAPPSPSGASTGQWHRDCKPFAEGFCVDVQGRRHLSATLVLRWFQAHLQRSLATVRYSLEGRCRVSLTPGSLEQPPTLHILPCRTDYGCCRLSMAVRLIPAVHLGDGVFLVAPPPPPSPSGALSELPGGLRAEALWGVNTARQEQKLLGWLQERAPPGACYLKCLQLLKALRDLGARGLDPMAATHWGRILSSYVLKTAVLEVLLNEGSPTPSWDEAHLSECLEKLVKFLRDCLLRRRDLFHCVLGPTGAAAEVGPLPKVLREAAPVDLLAPFDPHSRELAAARLLSTWRRLPQLLRVYGGPRYLARCPAPRSQRIQGSPEDEP.

A signal peptide spans 1-32; that stretch reads MSVRYTLNLRVFWPLVTGLCTALVCLYHALRS. Residues 33–43 lie on the Extracellular side of the membrane; it reads SEDARAESPDG. The helical transmembrane segment at 44 to 64 threads the bilayer; that stretch reads ADSGFPLLKVAILLLLGYILL. Over 65 to 535 the chain is Cytoplasmic; sequence RCRHAIRQRL…RIQGSPEDEP (471 aa). At Ser139 the chain carries Phosphoserine.

It belongs to the ITPRIP family.

It localises to the membrane. This is Inositol 1,4,5-trisphosphate receptor-interacting protein-like 2 (Itpripl2) from Mus musculus (Mouse).